Consider the following 381-residue polypeptide: Galactose-1-phosphate uridylyltransferase (381 aa).

Residues Cys-65 and Cys-68 each contribute to the Zn(2+) site. 90–91 (ND) is a binding site for UDP-alpha-D-glucose. Residue His-131 coordinates Zn(2+). Position 175 (Asn-175) interacts with UDP-alpha-D-glucose. Residue His-186 coordinates Zn(2+). The active-site Tele-UMP-histidine intermediate is His-188. Gln-190 lines the UDP-alpha-D-glucose pocket. Glu-204, His-306, His-323, and His-325 together coordinate Fe cation. UDP-alpha-D-glucose contacts are provided by residues 338–341 (KFMV) and 343–344 (FE).

Belongs to the galactose-1-phosphate uridylyltransferase type 1 family. Homodimer. The cofactor is Zn(2+).

The enzyme catalyses alpha-D-galactose 1-phosphate + UDP-alpha-D-glucose = alpha-D-glucose 1-phosphate + UDP-alpha-D-galactose. The protein operates within carbohydrate metabolism; galactose metabolism. The chain is Galactose-1-phosphate uridylyltransferase (GAL7) from Cryptococcus neoformans var. neoformans serotype D (strain B-3501A) (Filobasidiella neoformans).